Reading from the N-terminus, the 618-residue chain is DNA mismatch repair protein MutL (618 aa).

A compositionally biased stretch (polar residues) spans 348–359 (QTDTARSPTGNF). A disordered region spans residues 348–400 (QTDTARSPTGNFESGEVFDYPKSQLQPSHSVSSGGASLGSRSAGGSGGAYRAT). The segment covering 377–388 (SVSSGGASLGSR) has biased composition (low complexity).

The protein belongs to the DNA mismatch repair MutL/HexB family.

Functionally, this protein is involved in the repair of mismatches in DNA. It is required for dam-dependent methyl-directed DNA mismatch repair. May act as a 'molecular matchmaker', a protein that promotes the formation of a stable complex between two or more DNA-binding proteins in an ATP-dependent manner without itself being part of a final effector complex. This is DNA mismatch repair protein MutL from Pseudoalteromonas translucida (strain TAC 125).